The chain runs to 415 residues: Imidazolonepropionase (415 aa).

Fe(3+)-binding residues include H80 and H82. Zn(2+) is bound by residues H80 and H82. The 4-imidazolone-5-propanoate site is built by R89, Y152, and H185. Y152 serves as a coordination point for N-formimidoyl-L-glutamate. A Fe(3+)-binding site is contributed by H250. H250 lines the Zn(2+) pocket. Q253 is a binding site for 4-imidazolone-5-propanoate. Residue D325 coordinates Fe(3+). Residue D325 coordinates Zn(2+). The N-formimidoyl-L-glutamate site is built by N327 and G329. 4-imidazolone-5-propanoate is bound at residue T330.

Belongs to the metallo-dependent hydrolases superfamily. HutI family. The cofactor is Zn(2+). Requires Fe(3+) as cofactor.

The protein resides in the cytoplasm. It catalyses the reaction 4-imidazolone-5-propanoate + H2O = N-formimidoyl-L-glutamate. It functions in the pathway amino-acid degradation; L-histidine degradation into L-glutamate; N-formimidoyl-L-glutamate from L-histidine: step 3/3. In terms of biological role, catalyzes the hydrolytic cleavage of the carbon-nitrogen bond in imidazolone-5-propanoate to yield N-formimidoyl-L-glutamate. It is the third step in the universal histidine degradation pathway. This Rhizobium meliloti (strain 1021) (Ensifer meliloti) protein is Imidazolonepropionase.